Reading from the N-terminus, the 385-residue chain is NifS/IcsS protein homolog (385 aa).

Residues 69-70 (GT), N149, Q178, and 199-201 (SSH) each bind pyridoxal 5'-phosphate. K202 carries the post-translational modification N6-(pyridoxal phosphate)lysine. T237 serves as a coordination point for pyridoxal 5'-phosphate. The active-site Cysteine persulfide intermediate is C325. C325 contributes to the [2Fe-2S] cluster binding site.

It belongs to the class-V pyridoxal-phosphate-dependent aminotransferase family. NifS/IscS subfamily. The cofactor is pyridoxal 5'-phosphate.

This Lactobacillus delbrueckii subsp. bulgaricus (strain ATCC 11842 / DSM 20081 / BCRC 10696 / JCM 1002 / NBRC 13953 / NCIMB 11778 / NCTC 12712 / WDCM 00102 / Lb 14) protein is NifS/IcsS protein homolog.